A 188-amino-acid chain; its full sequence is 3-deoxy-D-manno-octulosonate 8-phosphate phosphatase KdsC (188 aa).

Positions 32 and 34 each coordinate Mg(2+). Substrate contacts are provided by residues Asp34, 55–59 (NVRDG), Arg63, Arg78, Arg86, and Lys102. Mg(2+) is bound at residue Asp125.

Belongs to the KdsC family. In terms of assembly, homotetramer. Mg(2+) serves as cofactor.

The catalysed reaction is 3-deoxy-alpha-D-manno-2-octulosonate-8-phosphate + H2O = 3-deoxy-alpha-D-manno-oct-2-ulosonate + phosphate. Its pathway is carbohydrate biosynthesis; 3-deoxy-D-manno-octulosonate biosynthesis; 3-deoxy-D-manno-octulosonate from D-ribulose 5-phosphate: step 3/3. The protein operates within bacterial outer membrane biogenesis; lipopolysaccharide biosynthesis. In terms of biological role, catalyzes the hydrolysis of 3-deoxy-D-manno-octulosonate 8-phosphate (KDO 8-P) to 3-deoxy-D-manno-octulosonate (KDO) and inorganic phosphate. This is 3-deoxy-D-manno-octulosonate 8-phosphate phosphatase KdsC from Escherichia coli (strain K12).